A 427-amino-acid polypeptide reads, in one-letter code: Glutamate-1-semialdehyde 2,1-aminomutase (427 aa).

Lys265 is modified (N6-(pyridoxal phosphate)lysine).

Belongs to the class-III pyridoxal-phosphate-dependent aminotransferase family. HemL subfamily. As to quaternary structure, homodimer. The cofactor is pyridoxal 5'-phosphate.

The protein localises to the cytoplasm. It catalyses the reaction (S)-4-amino-5-oxopentanoate = 5-aminolevulinate. Its pathway is porphyrin-containing compound metabolism; protoporphyrin-IX biosynthesis; 5-aminolevulinate from L-glutamyl-tRNA(Glu): step 2/2. The polypeptide is Glutamate-1-semialdehyde 2,1-aminomutase (Bordetella bronchiseptica (strain ATCC BAA-588 / NCTC 13252 / RB50) (Alcaligenes bronchisepticus)).